A 1255-amino-acid polypeptide reads, in one-letter code: DNA-directed RNA polymerase subunit beta' (1255 aa).

Positions 60, 62, 77, and 80 each coordinate Zn(2+). The Mg(2+) site is built by aspartate 503, aspartate 505, and aspartate 507. Residues cysteine 875, cysteine 950, cysteine 957, and cysteine 960 each coordinate Zn(2+).

This sequence belongs to the RNA polymerase beta' chain family. The RNAP catalytic core consists of 2 alpha, 1 beta, 1 beta' and 1 omega subunit. When a sigma factor is associated with the core the holoenzyme is formed, which can initiate transcription. Mg(2+) serves as cofactor. It depends on Zn(2+) as a cofactor.

It carries out the reaction RNA(n) + a ribonucleoside 5'-triphosphate = RNA(n+1) + diphosphate. DNA-dependent RNA polymerase catalyzes the transcription of DNA into RNA using the four ribonucleoside triphosphates as substrates. This is DNA-directed RNA polymerase subunit beta' from Mycoplasma capricolum subsp. capricolum (strain California kid / ATCC 27343 / NCTC 10154).